A 578-amino-acid chain; its full sequence is Malonate--CoA ligase ACSF3, mitochondrial (578 aa).

The N-terminal 19 residues, 1–19, are a transit peptide targeting the mitochondrion; sequence MRVGAFLGRSLFSCSHVRG. Residue 205 to 213 coordinates ATP; the sequence is TSGTTGRPK. Residues 394–413 form a disordered region; sequence QNPRKEGTSYTTHAQGDSTG. 3 residues coordinate ATP: aspartate 459, arginine 473, and lysine 565.

Belongs to the ATP-dependent AMP-binding enzyme family.

It localises to the mitochondrion. It catalyses the reaction tetracosanoate + ATP + CoA = tetracosanoyl-CoA + AMP + diphosphate. It carries out the reaction malonate + ATP + CoA = malonyl-CoA + AMP + diphosphate. Functionally, catalyzes the initial reaction in intramitochondrial fatty acid synthesis, by activating malonate and methylmalonate, but not acetate, into their respective CoA thioester. May have some preference toward very-long-chain substrates. This chain is Malonate--CoA ligase ACSF3, mitochondrial, found in Xenopus laevis (African clawed frog).